Reading from the N-terminus, the 63-residue chain is MKAAELRNKTQEELGDELISLLKEQFNLRMRKATGQLNQVHLLRKVRRDIARVKTVLNQKAGE.

This sequence belongs to the universal ribosomal protein uL29 family.

This chain is Large ribosomal subunit protein uL29, found in Hahella chejuensis (strain KCTC 2396).